The following is a 163-amino-acid chain: Large ribosomal subunit protein bL17 (163 aa).

The tract at residues 127-163 (VAKKATRTRRSKKSAEAAAPAAVEAPATEEPKAESAE) is disordered. Over residues 129–138 (KKATRTRRSK) the composition is skewed to basic residues. A compositionally biased stretch (low complexity) spans 142-154 (EAAAPAAVEAPAT).

This sequence belongs to the bacterial ribosomal protein bL17 family. Part of the 50S ribosomal subunit. Contacts protein L32.

The protein is Large ribosomal subunit protein bL17 of Bacteroides thetaiotaomicron (strain ATCC 29148 / DSM 2079 / JCM 5827 / CCUG 10774 / NCTC 10582 / VPI-5482 / E50).